Consider the following 20-residue polypeptide: Venom prothrombin activator notanarin-D (20 aa).

Positions 1 to 10 constitute a Gla domain; that stretch reads SNSLFEEVRP. 2 positions are modified to 4-carboxyglutamate: Glu6 and Glu7. Positions 11–20 constitute a Peptidase S1 domain; sequence IVNGMDCKLG.

It belongs to the peptidase S1 family. Snake venom subfamily. In terms of assembly, heterodimer of a light chain and a heavy chain; disulfide-linked. Post-translationally, gamma-carboxyglutamate residues are formed by vitamin K dependent carboxylation. These residues are essential for the binding of calcium. In terms of tissue distribution, expressed by the venom gland.

It is found in the secreted. The enzyme catalyses Selective cleavage of Arg-|-Thr and then Arg-|-Ile bonds in prothrombin to form thrombin.. Its function is as follows. Snake prothrombin activator that attacks the hemostatic system of prey. This protein is functionally similar to blood coagulation factor Xa. The chain is Venom prothrombin activator notanarin-D from Notechis scutatus niger (Peninsula tiger snake).